The sequence spans 202 residues: HTH-type transcriptional regulator BetI (202 aa).

The HTH tetR-type domain maps to 8–68; the sequence is PIRRRQLIDA…ATMRDITRQL (61 aa). Positions 31–50 form a DNA-binding region, H-T-H motif; the sequence is TIAQIARRAGVSAGIISHYF.

The protein operates within amine and polyamine biosynthesis; betaine biosynthesis via choline pathway [regulation]. In terms of biological role, repressor involved in the biosynthesis of the osmoprotectant glycine betaine. It represses transcription of the choline transporter BetT and the genes of BetAB involved in the synthesis of glycine betaine. This is HTH-type transcriptional regulator BetI from Cronobacter sakazakii (strain ATCC BAA-894) (Enterobacter sakazakii).